The primary structure comprises 445 residues: Phosphoglucosamine mutase (445 aa).

S102 functions as the Phosphoserine intermediate in the catalytic mechanism. S102, D241, D243, and D245 together coordinate Mg(2+). S102 carries the phosphoserine modification.

Belongs to the phosphohexose mutase family. Mg(2+) serves as cofactor. Activated by phosphorylation.

The catalysed reaction is alpha-D-glucosamine 1-phosphate = D-glucosamine 6-phosphate. In terms of biological role, catalyzes the conversion of glucosamine-6-phosphate to glucosamine-1-phosphate. The polypeptide is Phosphoglucosamine mutase (Escherichia coli O157:H7).